Reading from the N-terminus, the 272-residue chain is Putative pyruvate, phosphate dikinase regulatory protein (272 aa).

Residue 147–154 participates in ADP binding; it reads GLSRTSKT.

This sequence belongs to the pyruvate, phosphate/water dikinase regulatory protein family. PDRP subfamily.

The catalysed reaction is N(tele)-phospho-L-histidyl/L-threonyl-[pyruvate, phosphate dikinase] + ADP = N(tele)-phospho-L-histidyl/O-phospho-L-threonyl-[pyruvate, phosphate dikinase] + AMP + H(+). The enzyme catalyses N(tele)-phospho-L-histidyl/O-phospho-L-threonyl-[pyruvate, phosphate dikinase] + phosphate + H(+) = N(tele)-phospho-L-histidyl/L-threonyl-[pyruvate, phosphate dikinase] + diphosphate. Functionally, bifunctional serine/threonine kinase and phosphorylase involved in the regulation of the pyruvate, phosphate dikinase (PPDK) by catalyzing its phosphorylation/dephosphorylation. The sequence is that of Putative pyruvate, phosphate dikinase regulatory protein from Clostridium botulinum (strain Alaska E43 / Type E3).